Consider the following 230-residue polypeptide: Large ribosomal subunit protein uL1 (230 aa).

Belongs to the universal ribosomal protein uL1 family. In terms of assembly, part of the 50S ribosomal subunit.

In terms of biological role, binds directly to 23S rRNA. The L1 stalk is quite mobile in the ribosome, and is involved in E site tRNA release. Protein L1 is also a translational repressor protein, it controls the translation of the L11 operon by binding to its mRNA. The polypeptide is Large ribosomal subunit protein uL1 (Leuconostoc citreum (strain KM20)).